The chain runs to 154 residues: Superoxide dismutase [Cu-Zn] (154 aa).

3 residues coordinate Cu cation: His47, His49, and His64. Cysteines 58 and 147 form a disulfide. Positions 64, 72, 81, and 84 each coordinate Zn(2+). His121 is a Cu cation binding site. Residues 125–137 (DDLGRGGNEESKK) show a composition bias toward basic and acidic residues. The interval 125–147 (DDLGRGGNEESKKTGNAGPRPAC) is disordered. Residue Arg144 participates in substrate binding.

As to quaternary structure, homodimer. Cu cation is required as a cofactor. The cofactor is Zn(2+).

It localises to the cytoplasm. It carries out the reaction 2 superoxide + 2 H(+) = H2O2 + O2. Functionally, destroys radicals which are normally produced within the cells and which are toxic to biological systems. The protein is Superoxide dismutase [Cu-Zn] of Aspergillus niger.